We begin with the raw amino-acid sequence, 245 residues long: 14-3-3 protein zeta/delta (245 aa).

M1 carries the N-acetylmethionine modification. K3 is subject to N6-acetyllysine. S58 carries the phosphoserine; by PKA modification. K68 is modified (N6-acetyllysine). A phosphoserine mark is found at S184, S207, and S210. T232 carries the post-translational modification Phosphothreonine; by CK1.

Belongs to the 14-3-3 family. As to quaternary structure, interacts with CDK16 and BSPRY. Interacts with WEE1 (C-terminal). Interacts with SAMSN1. Interacts with MLF1 (phosphorylated form); the interaction retains it in the cytoplasm. Interacts with Thr-phosphorylated ITGB2. Interacts with BCL2L11. Homodimer. Heterodimerizes with YWHAE. Homo- and heterodimerization is inhibited by phosphorylation on Ser-58. Interacts with FOXO4, NOXA1, SSH1 and ARHGEF2. Interacts with Pseudomonas aeruginosa exoS (unphosphorylated form). Interacts with BAX; the interaction occurs in the cytoplasm. Under stress conditions, MAPK8-mediated phosphorylation releases BAX to mitochondria. Interacts with phosphorylated RAF1; the interaction is inhibited when YWHAZ is phosphorylated on Thr-232. Interacts with TP53; the interaction enhances p53 transcriptional activity. The Ser-58 phosphorylated form inhibits this interaction and p53 transcriptional activity. Interacts with ABL1 (phosphorylated form); the interaction retains ABL1 in the cytoplasm. Interacts with PKA-phosphorylated AANAT; the interaction modulates AANAT enzymatic activity by increasing affinity for arylalkylamines and acetyl-CoA and protecting the enzyme from dephosphorylation and proteasomal degradation. It may also prevent thiol-dependent inactivation. Interacts with AKT1; the interaction phosphorylates YWHAZ and modulates dimerization. Interacts with GAB2 and TLK2. Interacts with the 'Thr-369' phosphorylated form of DAPK2. Interacts with PI4KB, TBC1D22A and TBC1D22B. Interacts with ZFP36L1 (via phosphorylated form); this interaction occurs in a p38 MAPK- and AKT-signaling pathways. Interacts with SLITRK1. Interacts with AK5, LDB1, MADD, MARK3, PDE1A and SMARCB1. Interacts with YWHAZ. Interacts with MEFV. Interacts with ADAM22 (via C-terminus). In terms of processing, the delta, brain-specific form differs from the zeta form in being phosphorylated. Phosphorylation on Ser-184 by MAPK8; promotes dissociation of BAX and translocation of BAX to mitochondria. Phosphorylation on Thr-232; inhibits binding of RAF1. Phosphorylated on Ser-58 by PKA and protein kinase C delta type catalytic subunit in a sphingosine-dependent fashion. Phosphorylation on Ser-58 by PKA; disrupts homodimerization and heterodimerization with YHAE and TP53. In terms of tissue distribution, highly expressed in brain (at protein level).

Its subcellular location is the cytoplasm. It is found in the melanosome. Functionally, adapter protein implicated in the regulation of a large spectrum of both general and specialized signaling pathways. Binds to a large number of partners, usually by recognition of a phosphoserine or phosphothreonine motif. Binding generally results in the modulation of the activity of the binding partner. Promotes cytosolic retention and inactivation of TFEB transcription factor by binding to phosphorylated TFEB. Induces ARHGEF7 activity on RAC1 as well as lamellipodia and membrane ruffle formation. In neurons, regulates spine maturation through the modulation of ARHGEF7 activity. The sequence is that of 14-3-3 protein zeta/delta (YWHAZ) from Ovis aries (Sheep).